Consider the following 248-residue polypeptide: Carbohydrate deacetylase 2 (248 aa).

2 residues coordinate Mg(2+): His-59 and His-123.

Belongs to the YdjC deacetylase family. As to quaternary structure, homodimer. Requires Mg(2+) as cofactor.

Probably catalyzes the deacetylation of acetylated carbohydrates an important step in the degradation of oligosaccharides. The protein is Carbohydrate deacetylase 2 of Listeria innocua serovar 6a (strain ATCC BAA-680 / CLIP 11262).